Reading from the N-terminus, the 230-residue chain is Putative 14-3-3-like protein GF14-H (230 aa).

The protein belongs to the 14-3-3 family.

In terms of biological role, is associated with a DNA binding complex that binds to the G box, a well-characterized cis-acting DNA regulatory element found in plant genes. This chain is Putative 14-3-3-like protein GF14-H (GF14H), found in Oryza sativa subsp. japonica (Rice).